The primary structure comprises 622 residues: 1-deoxy-D-xylulose-5-phosphate synthase (622 aa).

Thiamine diphosphate-binding positions include histidine 80 and 121–123; that span reads GHS. Aspartate 152 serves as a coordination point for Mg(2+). Residues 153-154, asparagine 181, tyrosine 288, and glutamate 370 contribute to the thiamine diphosphate site; that span reads GA. Mg(2+) is bound at residue asparagine 181.

It belongs to the transketolase family. DXPS subfamily. As to quaternary structure, homodimer. Requires Mg(2+) as cofactor. Thiamine diphosphate serves as cofactor.

It catalyses the reaction D-glyceraldehyde 3-phosphate + pyruvate + H(+) = 1-deoxy-D-xylulose 5-phosphate + CO2. It functions in the pathway metabolic intermediate biosynthesis; 1-deoxy-D-xylulose 5-phosphate biosynthesis; 1-deoxy-D-xylulose 5-phosphate from D-glyceraldehyde 3-phosphate and pyruvate: step 1/1. Catalyzes the acyloin condensation reaction between C atoms 2 and 3 of pyruvate and glyceraldehyde 3-phosphate to yield 1-deoxy-D-xylulose-5-phosphate (DXP). This is 1-deoxy-D-xylulose-5-phosphate synthase from Hamiltonella defensa subsp. Acyrthosiphon pisum (strain 5AT).